The sequence spans 145 residues: Ribonuclease H (145 aa).

One can recognise an RNase H type-1 domain in the interval Met1–Glu141. The Mg(2+) site is built by Asp9, Glu47, Asp69, and Asp133.

The protein belongs to the RNase H family. Monomer. Mg(2+) serves as cofactor.

The protein resides in the cytoplasm. The enzyme catalyses Endonucleolytic cleavage to 5'-phosphomonoester.. Endonuclease that specifically degrades the RNA of RNA-DNA hybrids. The sequence is that of Ribonuclease H from Cupriavidus necator (strain ATCC 17699 / DSM 428 / KCTC 22496 / NCIMB 10442 / H16 / Stanier 337) (Ralstonia eutropha).